We begin with the raw amino-acid sequence, 1004 residues long: MVRPPSARSAVPGVGRLGLLDPTAAASLRELGWDNVESIPVLWALSRAPDADLALNTLMRLREALGSDWQRLDSAIRTDTSLRGRLFALLGSSTALGDHLVAEPAAWEVLRRGDLPDRDELLADLLAAVQATPEAGPHAGPMLFRAGIAGPEAVALLRCRYRDQLMLLAALDLAATVENEPVLPYRVVGRHLTDLADAALTAALAVAVARVCKDQPCPVRLAVIAMGKCGARELNYVSDVDVVFVAEPADATATRLAAEMMSVGSQAFFEVDAALRPEGKQGALVRTLDSHLTYYKRWARTWEFQALLKNRPMTGDLELGREYRDAVMPMVWTASERPDFVPEVQGMRRRVEDLVPAELRERELKLGRGSLRDVEFAVQLLQLVHGRVDENLHVASTVDALSALAAGGYVGRDDAANLTASYEFLRLLEHRLQLQRLKRTHTLPADDDEEGMRWLARAAHIRPDGRQDAMGVLRSEIRRNAVRVRRLHAKLFYRPLLEAVVRMDPDALRLSPDAAVRQLAALGYAAPENAFGHLKALTGGVSRKGRIQALLLPTLLEWLGETPNPDAGLLAYRRVSEALDEQTWFLRELRDEGAVAQRLMIVLGSSEFLPDLLINAPETIRMFADGPHGPLLLGPQPEEVARGILTAAARYDDPNRAVAAARSLRRHELARVASADLLGMLEVPQVCRALSSVWVAVLDAALAAVIRAGEAESGEPAPAAFAVIGMGRLGGMELGYGSDADVLFVCEPRPGVDETKAVKWANTVAERVQRLLGAPSTDPPLHVDAGLRPEGRSGALVRTLSAYQAYYGQWAQSWEVQALLRAHQVAGDQELGVRFLHAVDKVRYPAGGVSEDAVREIRRIKARVDSERLPRGADPATHTKLGRGGLADIEWTVQLLQLRHAHEVESLHNTATLETLAAIEKAELLAAEDVALLRDSWLLATKARNALVLVRGKPSDQLPGPGRLLSAVATVAGWPNNDGGSEFLDHYLRITRRARAVVERVFGS.

The segment at 1-496 is adenylyl removase; the sequence is MVRPPSARSA…LHAKLFYRPL (496 aa). The adenylyl transferase stretch occupies residues 502–1004; the sequence is RMDPDALRLS…RAVVERVFGS (503 aa).

It belongs to the GlnE family. Requires Mg(2+) as cofactor.

The enzyme catalyses [glutamine synthetase]-O(4)-(5'-adenylyl)-L-tyrosine + phosphate = [glutamine synthetase]-L-tyrosine + ADP. It carries out the reaction [glutamine synthetase]-L-tyrosine + ATP = [glutamine synthetase]-O(4)-(5'-adenylyl)-L-tyrosine + diphosphate. In terms of biological role, involved in the regulation of glutamine synthetase GlnA, a key enzyme in the process to assimilate ammonia. When cellular nitrogen levels are high, the C-terminal adenylyl transferase (AT) inactivates GlnA by covalent transfer of an adenylyl group from ATP to specific tyrosine residue of GlnA, thus reducing its activity. Conversely, when nitrogen levels are low, the N-terminal adenylyl removase (AR) activates GlnA by removing the adenylyl group by phosphorolysis, increasing its activity. The regulatory region of GlnE binds the signal transduction protein PII (GlnB) which indicates the nitrogen status of the cell. This Nocardia farcinica (strain IFM 10152) protein is Bifunctional glutamine synthetase adenylyltransferase/adenylyl-removing enzyme.